Reading from the N-terminus, the 463-residue chain is Kynureninase 2 (463 aa).

Residues Leu134, Thr135, 162-165 (FPSD), Asp247, His250, and Tyr272 each bind pyridoxal 5'-phosphate. Lys273 is modified (N6-(pyridoxal phosphate)lysine). Positions 312 and 340 each coordinate pyridoxal 5'-phosphate.

The protein belongs to the kynureninase family. In terms of assembly, homodimer. Pyridoxal 5'-phosphate is required as a cofactor.

The protein localises to the cytoplasm. The catalysed reaction is L-kynurenine + H2O = anthranilate + L-alanine + H(+). It catalyses the reaction 3-hydroxy-L-kynurenine + H2O = 3-hydroxyanthranilate + L-alanine + H(+). Its pathway is amino-acid degradation; L-kynurenine degradation; L-alanine and anthranilate from L-kynurenine: step 1/1. It functions in the pathway cofactor biosynthesis; NAD(+) biosynthesis; quinolinate from L-kynurenine: step 2/3. In terms of biological role, catalyzes the cleavage of L-kynurenine (L-Kyn) and L-3-hydroxykynurenine (L-3OHKyn) into anthranilic acid (AA) and 3-hydroxyanthranilic acid (3-OHAA), respectively. This Aspergillus terreus (strain NIH 2624 / FGSC A1156) protein is Kynureninase 2 (bna5-2).